A 301-amino-acid polypeptide reads, in one-letter code: uncharacterized protein (301 aa).

E146, E148, and D177 together coordinate a divalent metal cation.

Belongs to the FAH family.

This is an uncharacterized protein from Staphylococcus saprophyticus subsp. saprophyticus (strain ATCC 15305 / DSM 20229 / NCIMB 8711 / NCTC 7292 / S-41).